Here is a 365-residue protein sequence, read N- to C-terminus: MSDASDQTSRLDGRWPAAILIGAVISAAFVADRLIPNSLLSLPLMAAILVSTLITWWGVPRLRALKMGQVIRTEGPQGHLSKSGTPTMGGLLVVPVGVIIGGLVSSEGRSAQQLLAIALVTLAYMVIGGVDDWSSLTKRTNTGLTPRGKLLLQATAAVLFLGWAGWQGWIAGTVSLPFNLDLPLHWLIWPLALFVFLAESNATNLTDGLDGLASGCGALVFTGLALQLMLRGNAGDPALAGFCMAMAGCWLGFLIHNRNPAKVFMGDTGSLAMGAALSAVALLSDSLWPLLLMGGVFLAESVSVIVQVWVFKATKGADGQGRRVFRMAPLHHHFELGGTPEQVVVPLFWLVTAGLVMLGLGLHPR.

A run of 11 helical transmembrane segments spans residues 15–35 (WPAAILIGAVISAAFVADRLI), 39–59 (LLSLPLMAAILVSTLITWWGV), 84–104 (GTPTMGGLLVVPVGVIIGGLV), 114–134 (LLAIALVTLAYMVIGGVDDWS), 156–176 (AAVLFLGWAGWQGWIAGTVSL), 178–198 (FNLDLPLHWLIWPLALFVFLA), 209–229 (LDGLASGCGALVFTGLALQLM), 235–255 (GDPALAGFCMAMAGCWLGFLI), 263–283 (VFMGDTGSLAMGAALSAVALL), 291–311 (LLMGGVFLAESVSVIVQVWVF), and 343–363 (VVVPLFWLVTAGLVMLGLGLH).

This sequence belongs to the glycosyltransferase 4 family. MraY subfamily. The cofactor is Mg(2+).

The protein localises to the cell inner membrane. The catalysed reaction is UDP-N-acetyl-alpha-D-muramoyl-L-alanyl-gamma-D-glutamyl-meso-2,6-diaminopimeloyl-D-alanyl-D-alanine + di-trans,octa-cis-undecaprenyl phosphate = di-trans,octa-cis-undecaprenyl diphospho-N-acetyl-alpha-D-muramoyl-L-alanyl-D-glutamyl-meso-2,6-diaminopimeloyl-D-alanyl-D-alanine + UMP. It participates in cell wall biogenesis; peptidoglycan biosynthesis. Catalyzes the initial step of the lipid cycle reactions in the biosynthesis of the cell wall peptidoglycan: transfers peptidoglycan precursor phospho-MurNAc-pentapeptide from UDP-MurNAc-pentapeptide onto the lipid carrier undecaprenyl phosphate, yielding undecaprenyl-pyrophosphoryl-MurNAc-pentapeptide, known as lipid I. In Synechococcus sp. (strain WH7803), this protein is Phospho-N-acetylmuramoyl-pentapeptide-transferase.